Consider the following 715-residue polypeptide: Putative pentatricopeptide repeat-containing protein At3g23330 (715 aa).

PPR repeat units lie at residues 38–68 (SHTSASIVISIYTNLKLLHEALLLFKTLKSP), 69–103 (PVLAWKSVIRCFTDQSLFSKALASFVEMRASGRCP), 104–138 (DHNVFPSVLKSCTMMMDLRFGESVHGFIVRLGMDC), 139–172 (DLYTGNALMNMYAKLLGMGSKISVGNVFDEMPQR), 206–240 (DVVSYNTIIAGYAQSGMYEDALRMVREMGTTDLKP), 241–275 (DSFTLSSVLPIFSEYVDVIKGKEIHGYVIRKGIDS), 276–306 (DVYIGSSLVDMYAKSARIEDSERVFSRLYCR), 307–341 (DGISWNSLVAGYVQNGRYNEALRLFRQMVTAKVKP), 342–376 (GAVAFSSVIPACAHLATLHLGKQLHGYVLRGGFGS), 377–407 (NIFIASALVDMYSKCGNIKAARKIFDRMNVL), 408–442 (DEVSWTAIIMGHALHGHGHEAVSLFEEMKRQGVKP), 443–473 (NQVAFVAVLTACSHVGLVDEAWGYFNSMTKV), and 479–509 (ELEHYAAVADLLGRAGKLEEAYNFISKMCVE). The tract at residues 514–589 (VWSTLLSSCS…KPACSWIEMK (76 aa)) is type E motif. The interval 590–620 (NKTHGFVSGDRSHPSMDKINEFLKAVMEQME) is type E(+) motif. The type DYW motif stretch occupies residues 621–715 (KEGYVADTSG…RGNCSCGDYW (95 aa)).

This sequence belongs to the PPR family. PCMP-H subfamily.

This Arabidopsis thaliana (Mouse-ear cress) protein is Putative pentatricopeptide repeat-containing protein At3g23330 (PCMP-H32).